The following is a 179-amino-acid chain: Large ribosomal subunit protein uL5 (179 aa).

This sequence belongs to the universal ribosomal protein uL5 family. In terms of assembly, part of the 50S ribosomal subunit; part of the 5S rRNA/L5/L18/L25 subcomplex. Contacts the 5S rRNA and the P site tRNA. Forms a bridge to the 30S subunit in the 70S ribosome.

This is one of the proteins that bind and probably mediate the attachment of the 5S RNA into the large ribosomal subunit, where it forms part of the central protuberance. In the 70S ribosome it contacts protein S13 of the 30S subunit (bridge B1b), connecting the 2 subunits; this bridge is implicated in subunit movement. Contacts the P site tRNA; the 5S rRNA and some of its associated proteins might help stabilize positioning of ribosome-bound tRNAs. This is Large ribosomal subunit protein uL5 from Alkaliphilus metalliredigens (strain QYMF).